A 116-amino-acid polypeptide reads, in one-letter code: Ig heavy chain V-A1 region BS-5 (116 aa).

Position 1 is a pyrrolidone carboxylic acid (Gln-1). An Ig-like domain is found at 1 to 107 (QSVEESGGRL…LVHLAFVDVW (107 aa)).

The chain is Ig heavy chain V-A1 region BS-5 from Oryctolagus cuniculus (Rabbit).